The sequence spans 433 residues: MGIIDEAKRGQITDEMRAISKLEGIPVEKVRNRISEGKIMLIRNAKYPSRKLVPIGKGLTTKVNVNIGTSSEVVDLDMELQKVKVANKWGDTLMDLSTGGDLDAIRRDIIKASDLPVGTVPVYQIFIESFKKKSGGAYFTEDELLNTVEKHLKDGVAFMTIHAGITKDLAIRALKSDRIIPIVSRGGDMIAGWMIHNNSENPYRKNWDYVLEMFKEYDAVISLGDALRPGATGDAHDEFQIGELLETARLVKNALQKGVQVMVEGPGHVPLNEIAWDVKLMKKLTGGVPYYVLGPLPIDVGAPYDHIASAIGAAISSASGVDLLCYLTPAEHLGLPTVKQVEEGAIAYRVAAHAGDVVKLGRKARKWDDEVSYYRGKLDWENMISKLIDPQRAYQVYTQFGTPKVKACTMCGGYCPMMWAMDQVRKIGSSSSL.

Residues Asn-66, Met-94, Tyr-123, His-162, 184 to 186 (SRG), 225 to 228 (DALR), and Glu-264 each bind substrate. His-268 is a binding site for Zn(2+). Tyr-291 is a binding site for substrate. Residue His-332 coordinates Zn(2+). [4Fe-4S] cluster contacts are provided by Cys-408, Cys-411, and Cys-415.

Belongs to the ThiC family. The cofactor is [4Fe-4S] cluster.

The enzyme catalyses 5-amino-1-(5-phospho-beta-D-ribosyl)imidazole + S-adenosyl-L-methionine = 4-amino-2-methyl-5-(phosphooxymethyl)pyrimidine + CO + 5'-deoxyadenosine + formate + L-methionine + 3 H(+). It functions in the pathway cofactor biosynthesis; thiamine diphosphate biosynthesis. In terms of biological role, catalyzes the synthesis of the hydroxymethylpyrimidine phosphate (HMP-P) moiety of thiamine from aminoimidazole ribotide (AIR) in a radical S-adenosyl-L-methionine (SAM)-dependent reaction. This chain is Phosphomethylpyrimidine synthase, found in Saccharolobus islandicus (strain M.16.27) (Sulfolobus islandicus).